Here is a 133-residue protein sequence, read N- to C-terminus: Ubiquitin-like FUBI-ribosomal protein eS30 fusion protein (133 aa).

A Ubiquitin-like domain is found at 1–74 (MQLFVRAQEL…LEVAGRMLGG (74 aa)). The segment at 84–110 (GKVRGQTPKVAKQEKKKKKTGRAKRRM) is disordered. Residues 97 to 110 (EKKKKKTGRAKRRM) show a composition bias toward basic residues. N6-succinyllysine is present on K125.

It in the N-terminal section; belongs to the ubiquitin family. This sequence in the C-terminal section; belongs to the eukaryotic ribosomal protein eS30 family. In terms of assembly, component of the 40S subunit of the ribosome. FUBI is cleaved from ribosomal protein S30 by the deubiquitinase USP36 before the assembly of ribosomal protein S30 into pre-40S ribosomal particles. FUBI removal from ribosomal protein S30 is a crucial event for the final maturation of pre-40S particles.

Its subcellular location is the cytoplasm. It localises to the nucleus. May have pro-apoptotic activity. Functionally, component of the 40S subunit of the ribosome. Contributes to the assembly and function of 40S ribosomal subunits. This is Ubiquitin-like FUBI-ribosomal protein eS30 fusion protein from Homo sapiens (Human).